Here is a 247-residue protein sequence, read N- to C-terminus: UDP-N-acetyl-D-mannosaminuronic acid transferase (247 aa).

This sequence belongs to the glycosyltransferase 26 family.

The enzyme catalyses UDP-N-acetyl-alpha-D-mannosaminouronate + N-acetyl-alpha-D-glucosaminyl-di-trans,octa-cis-undecaprenyl diphosphate = beta-D-ManNAcA-(1-&gt;4)-alpha-D-GlcNAc-di-trans,octa-cis-undecaprenyl diphosphate + UDP + H(+). Its pathway is bacterial outer membrane biogenesis; enterobacterial common antigen biosynthesis. Catalyzes the synthesis of Und-PP-GlcNAc-ManNAcA (Lipid II), the second lipid-linked intermediate involved in enterobacterial common antigen (ECA) synthesis. In Enterobacter sp. (strain 638), this protein is UDP-N-acetyl-D-mannosaminuronic acid transferase.